Consider the following 171-residue polypeptide: UPF0398 protein MGAS9429_Spy1349 (171 aa).

The protein belongs to the UPF0398 family.

The chain is UPF0398 protein MGAS9429_Spy1349 from Streptococcus pyogenes serotype M12 (strain MGAS9429).